A 434-amino-acid polypeptide reads, in one-letter code: CBL-interacting protein kinase 15 (434 aa).

Residues 12-267 (YELGRLLGKG…IQKIKESTWF (256 aa)) form the Protein kinase domain. Residues 18–26 (LGKGTFGKV) and K41 contribute to the ATP site. D135 functions as the Proton acceptor in the catalytic mechanism. The interval 153–182 (DFGLSALSESKRQDGLLHTTCGTPAYVAPE) is activation loop. The region spanning 298–333 (RKKNAHEDVKPMSVTNLNAFEIISFSKGFDLSGMFI) is the NAF domain. The PPI stretch occupies residues 338 to 367 (RNEARFTSDKSASTIISKLEDVAKALNLRV).

This sequence belongs to the protein kinase superfamily. CAMK Ser/Thr protein kinase family. SNF1 subfamily. Mn(2+) serves as cofactor.

The enzyme catalyses L-seryl-[protein] + ATP = O-phospho-L-seryl-[protein] + ADP + H(+). It catalyses the reaction L-threonyl-[protein] + ATP = O-phospho-L-threonyl-[protein] + ADP + H(+). Its function is as follows. Involved in salt stress tolerance. CIPK serine-threonine protein kinases interact with CBL proteins. Binding of a CBL protein to the regulatory NAF domain of CIPK protein lead to the activation of the kinase in a calcium-dependent manner. This Oryza sativa subsp. japonica (Rice) protein is CBL-interacting protein kinase 15 (CIPK15).